We begin with the raw amino-acid sequence, 417 residues long: Tyrosine--tRNA ligase (417 aa).

Residue Tyr-39 coordinates L-tyrosine. Residues Pro-44 to Gly-53 carry the 'HIGH' region motif. L-tyrosine-binding residues include Tyr-176 and Gln-180. Residues Lys-236–Ser-240 carry the 'KMSKS' region motif. Lys-239 lines the ATP pocket. The S4 RNA-binding domain maps to Ile-350–Ala-417.

This sequence belongs to the class-I aminoacyl-tRNA synthetase family. TyrS type 1 subfamily. Homodimer.

It is found in the cytoplasm. The catalysed reaction is tRNA(Tyr) + L-tyrosine + ATP = L-tyrosyl-tRNA(Tyr) + AMP + diphosphate + H(+). Catalyzes the attachment of tyrosine to tRNA(Tyr) in a two-step reaction: tyrosine is first activated by ATP to form Tyr-AMP and then transferred to the acceptor end of tRNA(Tyr). The protein is Tyrosine--tRNA ligase of Brucella abortus (strain 2308).